The primary structure comprises 424 residues: MEAVYLVVNGVGLVLDLLTLMLDLNFLLVSSLLATLAWLLAFIYNLPHTVLTSLLHLGRGFLLSLLALVEAVVRFTFGGLQALGTLLYSCYSGLESLKLLGHLASHGALRSREFLNRGILNMVSNGHALLRQACDICAIAMSLVAYVINSLVNICLISTQNFFSLVLALWDAVTGPLWRMTDVVAAFLAHISSSAVAMAILLWTPCQLALELLASAARLLASCVVFHLTGLVLLACVLAVILIVLHPEQTLRLATQALSQLHARPSYHRLWEDIVRLTRLPLGLEAWRRVWSRSLQLASWPNRGGAPGAPQGGPRRVFSARIQPQDTPPEAEEEVIRTAPARGREQLNEDEPAAGQDPWKLLKEQEERKKCVICQDQSKTVLLLPCRHLCLCQACTEILMRHPVYHRNCPLCRRSILQTLNVYL.

Transmembrane regions (helical) follow at residues 24 to 44 (LNFL…AFIY), 60 to 80 (GFLL…FGGL), 157 to 177 (ISTQ…TGPL), 183 to 203 (VVAA…ILLW), and 224 to 244 (VVFH…ILIV). The RING-type zinc-finger motif lies at 371-413 (CVICQDQSKTVLLLPCRHLCLCQACTEILMRHPVYHRNCPLCR).

In terms of assembly, interacts with INCA1. Interacts with TMEM43, ENDOD1, TMEM33 and TMED1 to form a complex capable of modulating innate immune signaling through the cGAS-STING pathway. Interacts with UBE2J1; this interaction is important for SQSTM1 ubiquitination.

It localises to the endoplasmic reticulum membrane. It carries out the reaction S-ubiquitinyl-[E2 ubiquitin-conjugating enzyme]-L-cysteine + [acceptor protein]-L-lysine = [E2 ubiquitin-conjugating enzyme]-L-cysteine + N(6)-ubiquitinyl-[acceptor protein]-L-lysine.. It participates in protein modification; protein ubiquitination. In terms of biological role, E3 ubiquitin-protein ligase that plays a key role in endosome organization by retaining vesicles in the perinuclear cloud. Acts as a platform for perinuclear positioning of the endosomal system by mediating ubiquitination of SQSTM1 through interaction with the ubiquitin conjugating enzyme UBE2J1. Ubiquitinated SQSTM1 attracts specific vesicle-associated adapters, forming a molecular bridge that restrains cognate vesicles in the perinuclear region and organizes the endosomal pathway for efficient cargo transport. Also acts as a regulator of type I interferon production in response to viral infection by mediating the formation of 'Lys-11'-linked polyubiquitin chains on TMEM173/STING, leading to stabilize TMEM173/STING. Also required to limit type I interferon response by promoting autophagic degradation of IRF3. This is E3 ubiquitin-protein ligase RNF26 from Mus musculus (Mouse).